An 861-amino-acid polypeptide reads, in one-letter code: MAGPGPGAVLESPRQLLGRVRFLAEAARSLRAGRPLPAALAFVPREVLYKLYKDPAGPSRVLLPVWEAEGLGLRVGAAGPAPGTGSGPLRAARDSIELRRGACVRTTGEELCNGHGLWVKLTKEQLAEHLGDCGLQEGWLLVCRPAEGGARLVPIDTPNHLQRQQQLFGVDYRPVLRWEQVVDLTYSHRLGSRPQPAEAYAEAVQRLLYVPPTWTYECDEDLIHFLYDHLGKEDENLGSVKQYVESIDVSSYTEEFNVSCLTDSNADTYWESDGSQCQHWVRLTMKKGTIVKKLLLTVDTTDDNFMPKRVVVYGGEGDNLKKLSDVSIDETLIGDVCVLEDMTVHLPIIEIRIVECRDDGIDVRLRGVKIKSSRQRELGLNADLFQPTSLVRYPRLEGTDPEVLYRRAVLLQRFIKILDSVLHHLVPAWDHTLGTFSEIKQVKQFLLLSRQRPGLVAQCLRDSESSKPSFMPRLYINRRLAMEHRACPSRDPACKNAVFTQVYEGLKPSDKYEKPLDYRWPMRYDQWWECKFIAEGIIDQGGGFRDSLADMSEELCPSSADTPVPLPFFVRTANQGNGTGEARDMYVPNPSCRDFAKYEWIGQLMGAALRGKEFLVLALPGFVWKQLSGEEVSWSKDFPAVDSVLVKLLEVMEGMDKETFEFKFGKELTFTTVLSDQQVVELIPGGAGIVVGYGDRSRFIQLVQKARLEESKEQVAAMQAGLLKVVPQAVLDLLTWQELEKKVCGDPEVTVDALRKLTRFEDFEPSDSRVQYFWEALNNFTNEDRSRFLRFVTGRSRLPARIYIYPDKLGYETTDALPESSTCSSTLFLPHYASAKVCEEKLRYAAYNCVAIDTDMSPWEE.

An N-acetylalanine modification is found at alanine 2. Serine 12 is modified (phosphoserine). The region spanning 219-397 is the DOC domain; it reads DEDLIHFLYD…TSLVRYPRLE (179 aa). One can recognise an HECT domain in the interval 512–857; it reads YEKPLDYRWP…NCVAIDTDMS (346 aa). Cysteine 823 acts as the Glycyl thioester intermediate in catalysis.

Interacts with TRIOBP. Interacts with STX8.

It localises to the cytoplasm. The protein resides in the perinuclear region. The enzyme catalyses S-ubiquitinyl-[E2 ubiquitin-conjugating enzyme]-L-cysteine + [acceptor protein]-L-lysine = [E2 ubiquitin-conjugating enzyme]-L-cysteine + N(6)-ubiquitinyl-[acceptor protein]-L-lysine.. Its pathway is protein modification; protein ubiquitination. E3 ubiquitin ligases accepts ubiquitin from an E2 ubiquitin-conjugating enzyme in the form of a thioester and then directly transfers the ubiquitin to targeted substrates. Mediates ubiquitination of TRIOBP and its subsequent proteasomal degradation, thus facilitating cell cycle progression by regulating the turn-over of TRIOBP. Mediates also ubiquitination of STX8. The polypeptide is E3 ubiquitin-protein ligase HECTD3 (HECTD3) (Homo sapiens (Human)).